The primary structure comprises 200 residues: Holliday junction branch migration complex subunit RuvA (200 aa).

The interval 1 to 64 is domain I; that stretch reads MIAKLKGLLD…ENDMRLLGFA (64 aa). The tract at residues 65 to 143 is domain II; that stretch reads EASERDWFRL…ALPSAPGGAA (79 aa). The flexible linker stretch occupies residues 144 to 154; that stretch reads MAANPAGGASA. The segment at 154–200 is domain III; sequence ADAVSALENLGFKPAIAARAVATAQGELGEGASESELIRVALKRAAG.

Belongs to the RuvA family. As to quaternary structure, homotetramer. Forms an RuvA(8)-RuvB(12)-Holliday junction (HJ) complex. HJ DNA is sandwiched between 2 RuvA tetramers; dsDNA enters through RuvA and exits via RuvB. An RuvB hexamer assembles on each DNA strand where it exits the tetramer. Each RuvB hexamer is contacted by two RuvA subunits (via domain III) on 2 adjacent RuvB subunits; this complex drives branch migration. In the full resolvosome a probable DNA-RuvA(4)-RuvB(12)-RuvC(2) complex forms which resolves the HJ.

The protein resides in the cytoplasm. Functionally, the RuvA-RuvB-RuvC complex processes Holliday junction (HJ) DNA during genetic recombination and DNA repair, while the RuvA-RuvB complex plays an important role in the rescue of blocked DNA replication forks via replication fork reversal (RFR). RuvA specifically binds to HJ cruciform DNA, conferring on it an open structure. The RuvB hexamer acts as an ATP-dependent pump, pulling dsDNA into and through the RuvAB complex. HJ branch migration allows RuvC to scan DNA until it finds its consensus sequence, where it cleaves and resolves the cruciform DNA. The sequence is that of Holliday junction branch migration complex subunit RuvA from Erythrobacter litoralis (strain HTCC2594).